A 316-amino-acid polypeptide reads, in one-letter code: uncharacterized protein (316 aa).

In terms of domain architecture, S4 RNA-binding spans 26–98 (ERIDRFLAGA…IPLDVVYEDA (73 aa)). Asp-148 is an active-site residue.

Belongs to the pseudouridine synthase RluA family.

It carries out the reaction a uridine in RNA = a pseudouridine in RNA. This is an uncharacterized protein from Chloroflexus aurantiacus (strain ATCC 29366 / DSM 635 / J-10-fl).